A 556-amino-acid polypeptide reads, in one-letter code: Formate--tetrahydrofolate ligase (556 aa).

Residue 65-72 (TPAGEGKT) participates in ATP binding.

The protein belongs to the formate--tetrahydrofolate ligase family.

It catalyses the reaction (6S)-5,6,7,8-tetrahydrofolate + formate + ATP = (6R)-10-formyltetrahydrofolate + ADP + phosphate. It functions in the pathway one-carbon metabolism; tetrahydrofolate interconversion. This Agathobacter rectalis (strain ATCC 33656 / DSM 3377 / JCM 17463 / KCTC 5835 / VPI 0990) (Eubacterium rectale) protein is Formate--tetrahydrofolate ligase.